The chain runs to 510 residues: Scarecrow-like protein 29 (510 aa).

The disordered stretch occupies residues 90–142 (LDLPPEIQQPNDQSRKRSHDGFLEAQQVKKSARSKRKAIKSSEKSSKDGNKEG). Over residues 102 to 111 (QSRKRSHDGF) the composition is skewed to basic and acidic residues. The span at 119–128 (KSARSKRKAI) shows a compositional bias: basic residues. The segment covering 129 to 142 (KSSEKSSKDGNKEG) has biased composition (basic and acidic residues). One can recognise a GRAS domain in the interval 136–510 (KDGNKEGRWA…EAVSFCSLWK (375 aa)). Residues 143–205 (RWAEKLLNPC…HLSSSSVSSS (63 aa)) form a leucine repeat I (LRI) region. The segment at 224–294 (LLKFYEVSPW…GPPPRVRITV (71 aa)) is VHIID. The VHIID signature appears at 259–263 (LHIID). The segment at 312–337 (NYGSQLLGFARSLKINLQISVLDKLQ) is leucine repeat II (LRII). Residues 347–435 (LIVCAQFRLH…RKLMEGEATK (89 aa)) form a PFYRE region. The interval 438 to 510 (MNAGDMNEGK…EAVSFCSLWK (73 aa)) is SAW.

This sequence belongs to the GRAS family. Expressed in seedlings, roots and flowers.

Its subcellular location is the nucleus. Probable transcription factor involved in plant development. The protein is Scarecrow-like protein 29 (SCL29) of Arabidopsis thaliana (Mouse-ear cress).